The chain runs to 1291 residues: DNA-directed RNA polymerase subunit beta (1291 aa).

It belongs to the RNA polymerase beta chain family. In terms of assembly, the RNAP catalytic core consists of 2 alpha, 1 beta, 1 beta' and 1 omega subunit. When a sigma factor is associated with the core the holoenzyme is formed, which can initiate transcription.

It catalyses the reaction RNA(n) + a ribonucleoside 5'-triphosphate = RNA(n+1) + diphosphate. DNA-dependent RNA polymerase catalyzes the transcription of DNA into RNA using the four ribonucleoside triphosphates as substrates. This Mycoplasma mycoides subsp. mycoides SC (strain CCUG 32753 / NCTC 10114 / PG1) protein is DNA-directed RNA polymerase subunit beta.